A 939-amino-acid polypeptide reads, in one-letter code: Translation initiation factor IF-2 (939 aa).

Positions glutamate 81–leucine 94 are enriched in basic and acidic residues. 2 disordered regions span residues glutamate 81–glutamate 303 and threonine 316–arginine 337. The span at serine 99 to alanine 108 shows a compositional bias: low complexity. Composition is skewed to basic and acidic residues over residues glutamate 112 to proline 127 and serine 148 to alanine 173. A compositionally biased stretch (low complexity) spans glutamate 178 to proline 189. The span at phenylalanine 244–phenylalanine 255 shows a compositional bias: basic and acidic residues. Low complexity predominate over residues alanine 276–glutamate 287. Residues lysine 292–lysine 301 show a composition bias toward basic residues. Residues serine 318 to serine 328 show a composition bias toward low complexity. The tr-type G domain maps to threonine 436–lysine 606. The tract at residues glycine 445–threonine 452 is G1. Residue glycine 445–threonine 452 coordinates GTP. The tract at residues glycine 470–histidine 474 is G2. Positions aspartate 492–glycine 495 are G3. Residues aspartate 492–histidine 496 and asparagine 546–aspartate 549 contribute to the GTP site. A G4 region spans residues asparagine 546–aspartate 549. Positions serine 582–lysine 584 are G5.

This sequence belongs to the TRAFAC class translation factor GTPase superfamily. Classic translation factor GTPase family. IF-2 subfamily.

Its subcellular location is the cytoplasm. Its function is as follows. One of the essential components for the initiation of protein synthesis. Protects formylmethionyl-tRNA from spontaneous hydrolysis and promotes its binding to the 30S ribosomal subunits. Also involved in the hydrolysis of GTP during the formation of the 70S ribosomal complex. This Chlorobaculum parvum (strain DSM 263 / NCIMB 8327) (Chlorobium vibrioforme subsp. thiosulfatophilum) protein is Translation initiation factor IF-2.